The sequence spans 328 residues: Nitrilase (328 aa).

The CN hydrolase domain occupies 9–286 (VRVAAIQAEP…EGILYANVDV (278 aa)). Glutamate 49 acts as the Proton acceptor in catalysis. Lysine 131 is a catalytic residue. The active-site Nucleophile is cysteine 166.

Belongs to the carbon-nitrogen hydrolase superfamily. Nitrilase family.

It carries out the reaction a nitrile + 2 H2O = a carboxylate + NH4(+). Functionally, nitrilase that hydrolyzes preferentially 4-cyanopyridine. Is also able to hydrolyze some aliphatic nitriles, such as (R,S)-mandelonitrile. The chain is Nitrilase from Penicillium rubens (strain ATCC 28089 / DSM 1075 / NRRL 1951 / Wisconsin 54-1255) (Penicillium chrysogenum).